The following is a 152-amino-acid chain: Deoxyuridine 5'-triphosphate nucleotidohydrolase (152 aa).

Substrate is bound by residues Arg-71–Gly-73, Asn-84, Leu-88–Asp-90, and Met-98.

This sequence belongs to the dUTPase family. Mg(2+) is required as a cofactor.

The enzyme catalyses dUTP + H2O = dUMP + diphosphate + H(+). Its pathway is pyrimidine metabolism; dUMP biosynthesis; dUMP from dCTP (dUTP route): step 2/2. In terms of biological role, this enzyme is involved in nucleotide metabolism: it produces dUMP, the immediate precursor of thymidine nucleotides and it decreases the intracellular concentration of dUTP so that uracil cannot be incorporated into DNA. In Shewanella halifaxensis (strain HAW-EB4), this protein is Deoxyuridine 5'-triphosphate nucleotidohydrolase.